A 208-amino-acid polypeptide reads, in one-letter code: Granulocyte colony-stimulating factor (208 aa).

An N-terminal signal peptide occupies residues Met1–Ala30. Disulfide bonds link Cys72–Cys78 and Cys100–Cys110. Thr169 carries an O-linked (GalNAc...) threonine glycan.

Belongs to the IL-6 superfamily. Monomer. In terms of processing, O-glycosylated.

It localises to the secreted. In terms of biological role, granulocyte/macrophage colony-stimulating factors are cytokines that act in hematopoiesis by controlling the production, differentiation, and function of 2 related white cell populations of the blood, the granulocytes and the monocytes-macrophages. This CSF induces granulocytes. The protein is Granulocyte colony-stimulating factor (Csf3) of Mus musculus (Mouse).